A 252-amino-acid chain; its full sequence is Putative phosphonates utilization ATP-binding protein PhnK (252 aa).

Residues 6–246 (LSVNNLTHLY…PHHPYTQLLV (241 aa)) form the ABC transporter domain. Position 38 to 45 (38 to 45 (GESGSGKT)) interacts with ATP.

This sequence belongs to the ABC transporter superfamily. Forms a complex with PhnG, PhnH, PhnI and PhnJ with the suggested composition PhnG(4)H(2)I(2)J(2)K.

Functionally, belongs to an operon involved in alkylphosphonate uptake and C-P lyase. Exact function not known. PhnK is not required for the ribophosphonate triphosphate (RPnTP) synthase reaction. The polypeptide is Putative phosphonates utilization ATP-binding protein PhnK (phnK) (Escherichia coli (strain K12)).